Reading from the N-terminus, the 638-residue chain is ATP-dependent rRNA helicase spb4 (638 aa).

Residues 14-42 carry the Q motif motif; that stretch reads WDAVNPPLSEWVLDAVSSMGFTRMTPVQA. The 205-residue stretch at 45-249 folds into the Helicase ATP-binding domain; that stretch reads IPLFMAHKDV…RVGLRNPVKV (205 aa). 58–65 lines the ATP pocket; sequence AVTGSGKT. A DEAD box motif is present at residues 197 to 200; it reads DEAD. Residues 283-437 form the Helicase C-terminal domain; the sequence is ALKHILNSVQ…PITVSDAEAA (155 aa). Positions 521–629 form a coiled coil; that stretch reads AYKDKQREKR…AKADKDAEEG (109 aa). The segment at 538–638 is disordered; the sequence is MAESGQQQTT…GGDEEFTGFD (101 aa). Positions 574–597 are enriched in basic and acidic residues; the sequence is MKQVRQERKRWEKMTEEEKKKALE. Residues 625-638 are compositionally biased toward acidic residues; it reads DAEEGGDEEFTGFD.

It belongs to the DEAD box helicase family. DDX55/SPB4 subfamily. Component of pre-60S ribosomal complexes.

The protein resides in the nucleus. It localises to the nucleolus. It carries out the reaction ATP + H2O = ADP + phosphate + H(+). Its function is as follows. ATP-binding RNA helicase involved in the biogenesis of 60S ribosomal subunits. Binds 90S pre-ribosomal particles and dissociates from pre-60S ribosomal particles after processing of 27SB pre-rRNA. Required for the normal formation of 18S rRNA through the processing of pre-rRNAs at sites A0, A1 and A2, and the normal formation of 25S and 5.8S rRNAs through the processing of pre-rRNAs at sites C1 and C2. The sequence is that of ATP-dependent rRNA helicase spb4 from Emericella nidulans (strain FGSC A4 / ATCC 38163 / CBS 112.46 / NRRL 194 / M139) (Aspergillus nidulans).